Reading from the N-terminus, the 117-residue chain is Putative membrane protein insertion efficiency factor (117 aa).

The protein belongs to the UPF0161 family.

The protein resides in the cell inner membrane. Its function is as follows. Could be involved in insertion of integral membrane proteins into the membrane. This chain is Putative membrane protein insertion efficiency factor, found in Bartonella bacilliformis (strain ATCC 35685 / KC583 / Herrer 020/F12,63).